A 443-amino-acid chain; its full sequence is MPGFHLNEMGEMVLDAIDDIGVVDVYDLASDIGKEYERIMDRFGTDAVSGLMPKIINTLELLEALATKNERENATIQELRDKVAQLESEKLEKAEFRRRFDKELELIEEQWRSETNELVDLVSSLQDENKRLVKQTQDLQSSSAQSSGLGASLTESIISMTNHELHSALSDTQVLQRLKEQIYKQRDELKHRERELQDKYSELEHLNIQAERLKASERDTRRRHKLMQAQVKTLCEERADFLAQLQDQSREINQLRKRLGLAEKENEDLVASYDDGQNDPNRPRYTTRELKELISERDELLTTIDTLNEQLAELKPPSQAKGKRQRHFSSSDDSDEDDDGHVADNDDDDDEEEAAAEANELEPPAAGETPPGHDAPVQGPLPYEPDDAPWKKSSESGIRKFFRKLFSDPSDGSNTFPKRSLATLSKMALSATPGSVSASAAAK.

The RH1 domain occupies 8 to 96 (EMGEMVLDAI…ESEKLEKAEF (89 aa)). A coiled-coil region spans residues 59-315 (LELLEALATK…TLNEQLAELK (257 aa)). The RH2 domain maps to 282-401 (RPRYTTRELK…KSSESGIRKF (120 aa)). A disordered region spans residues 311-394 (LAELKPPSQA…PDDAPWKKSS (84 aa)). A compositionally biased stretch (acidic residues) spans 332–355 (DDSDEDDDGHVADNDDDDDEEEAA). Residues 356 to 368 (AEANELEPPAAGE) are compositionally biased toward low complexity.

This sequence belongs to the RILPL family. As to quaternary structure, interacts with Arl8 (in GTP-bound form).

It is found in the lysosome membrane. Functionally, may have a role in lysosome distribution by interacting with Arl8. This chain is RILP-like protein homolog, found in Drosophila melanogaster (Fruit fly).